We begin with the raw amino-acid sequence, 742 residues long: 5-methyltetrahydropteroyltriglutamate--homocysteine methyltransferase (742 aa).

Residues 18–21 and Lys112 each bind 5-methyltetrahydropteroyltri-L-glutamate; that span reads REWK. L-homocysteine is bound by residues 420 to 422 and Glu473; that span reads IGS. Residues 420–422 and Glu473 contribute to the L-methionine site; that span reads IGS. Residue Trp550 participates in 5-methyltetrahydropteroyltri-L-glutamate binding. An L-homocysteine-binding site is contributed by Asp588. Asp588 is a binding site for L-methionine. Glu594 is a binding site for 5-methyltetrahydropteroyltri-L-glutamate. His630, Cys632, and Glu654 together coordinate Zn(2+). His683 acts as the Proton donor in catalysis. Cys715 serves as a coordination point for Zn(2+).

It belongs to the vitamin-B12 independent methionine synthase family. The cofactor is Zn(2+).

The enzyme catalyses 5-methyltetrahydropteroyltri-L-glutamate + L-homocysteine = tetrahydropteroyltri-L-glutamate + L-methionine. It participates in amino-acid biosynthesis; L-methionine biosynthesis via de novo pathway; L-methionine from L-homocysteine (MetE route): step 1/1. Functionally, catalyzes the transfer of a methyl group from 5-methyltetrahydrofolate to homocysteine resulting in methionine formation. The sequence is that of 5-methyltetrahydropteroyltriglutamate--homocysteine methyltransferase from Staphylococcus aureus (strain Mu3 / ATCC 700698).